Consider the following 148-residue polypeptide: Large ribosomal subunit protein bL9 (148 aa).

Belongs to the bacterial ribosomal protein bL9 family.

In terms of biological role, binds to the 23S rRNA. The protein is Large ribosomal subunit protein bL9 of Streptomyces avermitilis (strain ATCC 31267 / DSM 46492 / JCM 5070 / NBRC 14893 / NCIMB 12804 / NRRL 8165 / MA-4680).